The primary structure comprises 762 residues: 1-phosphatidylinositol 4,5-bisphosphate phosphodiesterase delta-4 (762 aa).

The 109-residue stretch at 16-124 folds into the PH domain; sequence LLMQEGMPMR…WMRGLQLLVD (109 aa). Positions 26–53 are substrate binding; sequence KVRSKSWKKLRYFRLQNDGMTVWHARQA. EF-hand domains are found at residues 134 to 169, 170 to 205, and 206 to 237; these read RLDQ…MNVE, MDQE…LTKR, and AEVQ…EQKE. The Ca(2+) site is built by Asp147, Asn149, Asp151, Lys153, Glu158, Asp183, Ser185, Ser187, Thr189, and Glu194. The GBA signature appears at 213–243; it reads ESFSADGQKLTLLEFLDFLQEEQKERDCTSE. Positions 290-435 constitute a PI-PLC X-box domain; the sequence is QDMTQPLNHY…LRRKILVKGK (146 aa). His305 is an active-site residue. Ca(2+) is bound by residues Asn306, Glu335, and Asp337. Residue His350 is part of the active site. Glu384 is a Ca(2+) binding site. Positions 433 and 435 each coordinate substrate. The span at 443 to 471 shows a compositional bias: acidic residues; that stretch reads LEYEEEEAEPELEESELALESQFETEPEP. The tract at residues 443–483 is disordered; that stretch reads LEYEEEEAEPELEESELALESQFETEPEPQEQNLQNKDKKK. Ser457 bears the Phosphoserine mark. Residues 493 to 609 enclose the PI-PLC Y-box domain; the sequence is LSSLVIYLKS…GYVLKPDFLR (117 aa). 2 residues coordinate substrate: Ser522 and Arg549. Residues 609–736 enclose the C2 domain; the sequence is RDIQSSFHPE…QGYRHIHLLS (128 aa). Positions 650, 652, 676, 705, 706, and 707 each coordinate Ca(2+). Residues 731–734 carry the PDZ-binding motif; that stretch reads HIHL.

As to quaternary structure, interacts with GRIP1. In terms of assembly, interacts (via GBA motif) with guanine nucleotide-binding protein G(i) alpha subunit GNAI3 (inactive GDP-bound form); high-affinity interaction. Interacts (via GBA motif) with guanine nucleotide-binding protein G(i) alpha subunit GNAI3 (inactive GDP-bound form); low-affinity interaction. It depends on Ca(2+) as a cofactor. Highly expressed in skeletal muscle and kidney tissues, and at moderate level in intestinal tissue. Expressed in corneal epithelial cells.

It is found in the membrane. Its subcellular location is the nucleus. It localises to the cytoplasm. The protein resides in the endoplasmic reticulum. It carries out the reaction a 1,2-diacyl-sn-glycero-3-phospho-(1D-myo-inositol-4,5-bisphosphate) + H2O = 1D-myo-inositol 1,4,5-trisphosphate + a 1,2-diacyl-sn-glycerol + H(+). It catalyses the reaction a 1,2-diacyl-sn-glycero-3-phospho-(1D-myo-inositol) + H2O = 1D-myo-inositol 1-phosphate + a 1,2-diacyl-sn-glycerol + H(+). Functionally, hydrolyzes the phosphatidylinositol 4,5-bisphosphate (PIP2) to generate 2 second messenger molecules diacylglycerol (DAG) and inositol 1,4,5-trisphosphate (IP3). DAG mediates the activation of protein kinase C (PKC), while IP3 releases Ca(2+) from intracellular stores. Required for acrosome reaction in sperm during fertilization, probably by acting as an important enzyme for intracellular Ca(2+) mobilization in the zona pellucida-induced acrosome reaction. May play a role in cell growth. Modulates the liver regeneration in cooperation with nuclear PKC. Overexpression up-regulates the Erk signaling pathway and proliferation. Acts as a non-receptor guanine nucleotide exchange factor which binds to and activates guanine nucleotide-binding protein (G-protein) alpha subunit GNAI3. The chain is 1-phosphatidylinositol 4,5-bisphosphate phosphodiesterase delta-4 from Homo sapiens (Human).